An 858-amino-acid chain; its full sequence is Large structural phosphoprotein (858 aa).

Residues 603–629 (DVSRGGKGNSRDLYSGGNAEKKETSGK) form a disordered region.

The protein belongs to the herpesviridae large structural phosphoprotein family. As to quaternary structure, homotetramer. Interacts with the major capsid protein. 180 tegument protein pU11 tetramers bind to the virion capsid. Post-translationally, phosphorylated at multiple sites.

It is found in the virion tegument. The sequence is that of Large structural phosphoprotein (U11) from Homo sapiens (Human).